Consider the following 474-residue polypeptide: N-lysine methyltransferase SETD6 (474 aa).

At serine 14 the chain carries Phosphoserine. Residues 63-287 (PKVLVSRQGT…KGHEIFNTYG (225 aa)) enclose the SET domain. Lysine 64 carries the post-translational modification N6-methylated lysine; by autocatalysis. Residue 74-76 (AGY) coordinates S-adenosyl-L-methionine. Position 123 (tryptophan 123) interacts with substrate. N6-methylated lysine; by autocatalysis is present on lysine 180. Tyrosine 224 contributes to the S-adenosyl-L-methionine binding site. Substrate-binding residues include serine 225 and glutamine 227. S-adenosyl-L-methionine contacts are provided by residues 252–253 (NH) and tyrosine 298. Lysine 373 is modified (N6-methylated lysine; by autocatalysis).

It belongs to the class V-like SAM-binding methyltransferase superfamily. Histone-lysine methyltransferase family. SETD6 subfamily. In terms of assembly, monomer, homodimer and homotrimer; these structures are stabilized in the presence of S-adenosyl-L-methionine (SAM). Post-translationally, automethylated.

The protein resides in the nucleus. The enzyme catalyses L-lysyl-[protein] + S-adenosyl-L-methionine = N(6)-methyl-L-lysyl-[protein] + S-adenosyl-L-homocysteine + H(+). It carries out the reaction L-lysyl(8)-[histone H2AZ] + S-adenosyl-L-methionine = N(6)-methyl-L-lysyl(8)-[histone H2AZ] + S-adenosyl-L-homocysteine + H(+). Functionally, protein-lysine N-methyltransferase. Monomethylates 'Lys-310' of the RELA subunit of NF-kappa-B complex, leading to down-regulation of NF-kappa-B transcription factor activity. Monomethylates 'Lys-8' of H2AZ (H2AZK8me1). Required for the maintenance of embryonic stem cell self-renewal. Methylates PAK4. The chain is N-lysine methyltransferase SETD6 (Setd6) from Rattus norvegicus (Rat).